A 601-amino-acid chain; its full sequence is Elongation factor 4 (601 aa).

The 183-residue stretch at 5–187 (EHIRNFSIIA…AIVERLPAPE (183 aa)) folds into the tr-type G domain. Residues 17-22 (DHGKST) and 134-137 (NKID) each bind GTP.

It belongs to the TRAFAC class translation factor GTPase superfamily. Classic translation factor GTPase family. LepA subfamily.

The protein resides in the cell inner membrane. It catalyses the reaction GTP + H2O = GDP + phosphate + H(+). Its function is as follows. Required for accurate and efficient protein synthesis under certain stress conditions. May act as a fidelity factor of the translation reaction, by catalyzing a one-codon backward translocation of tRNAs on improperly translocated ribosomes. Back-translocation proceeds from a post-translocation (POST) complex to a pre-translocation (PRE) complex, thus giving elongation factor G a second chance to translocate the tRNAs correctly. Binds to ribosomes in a GTP-dependent manner. This chain is Elongation factor 4, found in Nitratidesulfovibrio vulgaris (strain ATCC 29579 / DSM 644 / CCUG 34227 / NCIMB 8303 / VKM B-1760 / Hildenborough) (Desulfovibrio vulgaris).